Consider the following 715-residue polypeptide: Lactococcin-A transport/processing ATP-binding protein LcnC (715 aa).

The Peptidase C39 domain occupies 11 to 138 (QVDEMDCGCA…SEWTGISLFL (128 aa)). The active site involves C17. Transmembrane regions (helical) follow at residues 167–187 (VILN…LGSY), 197–217 (IPNA…LTYI), 237–257 (LAID…MSFF), 282–302 (TILS…ILGL), 307–327 (LFLL…IFTP), and 396–416 (AIIQ…LVIS). Residues 168 to 450 (ILNIVIASFI…IINLQTKLQK (283 aa)) form the ABC transmembrane type-1 domain. Residues 482 to 715 (LNMSDISYQY…NGFYEQLYHN (234 aa)) enclose the ABC transporter domain. ATP is bound at residue 515–522 (GMSGSGKS).

The protein belongs to the ABC transporter superfamily. Bacteriocin (lactococcin) exporter (TC 3.A.1.112.3) family.

The protein resides in the cell membrane. Its function is as follows. Involved in the export process of the bacteriocin lactococcin A. In Lactococcus lactis subsp. lactis (Streptococcus lactis), this protein is Lactococcin-A transport/processing ATP-binding protein LcnC (lcnC).